The primary structure comprises 378 residues: UPF0754 membrane protein BALH_0780 (378 aa).

2 helical membrane-spanning segments follow: residues 1–21 (MNIW…GGFT) and 357–377 (YLGA…LLFL).

The protein belongs to the UPF0754 family.

The protein resides in the cell membrane. The polypeptide is UPF0754 membrane protein BALH_0780 (Bacillus thuringiensis (strain Al Hakam)).